The sequence spans 689 residues: Glycine--tRNA ligase beta subunit (689 aa).

This sequence belongs to the class-II aminoacyl-tRNA synthetase family. As to quaternary structure, tetramer of two alpha and two beta subunits.

It is found in the cytoplasm. It carries out the reaction tRNA(Gly) + glycine + ATP = glycyl-tRNA(Gly) + AMP + diphosphate. In Shewanella piezotolerans (strain WP3 / JCM 13877), this protein is Glycine--tRNA ligase beta subunit.